The sequence spans 216 residues: Pentapeptide repeat protein VPA0095 (216 aa).

This sequence belongs to the pentapeptide repeat protein family.

In terms of biological role, has no effect when overexpressed in E.coli. When Cys-115 is mutated to Tyr and overexpressed it increases (fluoro)quinolone resistance in E.coli up to 16-fold for ciprofloxacin, levofloxacin and nalidixic acid. In Vibrio parahaemolyticus serotype O3:K6 (strain RIMD 2210633), this protein is Pentapeptide repeat protein VPA0095.